The sequence spans 271 residues: HTH-type transcriptional repressor AllR (271 aa).

Residues 21-83 (AQALERGIAI…SQLGWWHIGL (63 aa)) form the HTH iclR-type domain. The segment at residues 43-62 (VSDISLNLDLPLSTTFRLLK) is a DNA-binding region (H-T-H motif). Positions 98-267 (VLSVAGPFMR…ARDISTALGL (170 aa)) constitute an IclR-ED domain. Residues 154–156 (SGA), aspartate 207, cysteine 217, and 234–236 (SIS) contribute to the glyoxylate site.

Negative regulator of allantoin and glyoxylate utilization operons. Binds to the gcl promoter and to the allS-allA intergenic region. This chain is HTH-type transcriptional repressor AllR (allR), found in Escherichia coli (strain UTI89 / UPEC).